Consider the following 418-residue polypeptide: AP-1 complex subunit mu (418 aa).

The MHD domain occupies 176–417 (NNEAYFDVTE…VTKAGKFQVR (242 aa)).

Belongs to the adaptor complexes medium subunit family. As to quaternary structure, adaptor protein complex 1 (AP-1) is a heterotetramer composed of two large adaptins (gamma- and beta'-type subunits), a medium adaptin (mu-type subunit AP47) and a small adaptin (sigma-type subunit AP19). Post-translationally, regulated by phosphorylation.

The protein resides in the golgi apparatus. Its subcellular location is the cytoplasmic vesicle. It localises to the clathrin-coated vesicle membrane. Component of the adapter complexes which link clathrin to receptors in coated vesicles. Clathrin-associated protein complexes are believed to interact with the cytoplasmic tails of membrane proteins, leading to their selection and concentration. AP47 is a subunit of the plasma membrane adapter. The chain is AP-1 complex subunit mu from Diplobatis ommata (Ocellated electric ray).